Here is a 339-residue protein sequence, read N- to C-terminus: Phomopsene synthase (339 aa).

Residues D89, D94, N224, S228, and E232 each coordinate Mg(2+).

This sequence belongs to the terpene synthase family. The cofactor is Mg(2+).

The enzyme catalyses (2E,6E,10E)-geranylgeranyl diphosphate = phomopsene + diphosphate. It catalyses the reaction (2E,6E,10E)-geranylgeranyl diphosphate = allokutznerene + diphosphate. It functions in the pathway secondary metabolite biosynthesis; terpenoid biosynthesis. Its function is as follows. Diterpene synthase that catalyzes the conversion of geranylgeranyl diphosphate (GGPP) to phomopsene, a diterpene previously reported from the fungus P.amygdali. Phomopsene is the main product, but the enzyme can also produce allokutznerene (about 50% of phomopsene production activity) and traces of spiroviolene. Cannot use geranyl diphosphate (GPP), farnesyl diphosphate (FPP) and geranylfarnesyl diphosphate (GFPP). This is Phomopsene synthase from Allokutzneria albata (Kibdelosporangium albatum).